Here is a 227-residue protein sequence, read N- to C-terminus: Terpene cyclase ltmB (227 aa).

A run of 7 helical transmembrane segments spans residues 20 to 40 (LAET…VLMI), 51 to 71 (MALI…IIYP), 76 to 96 (VELA…TSAA), 113 to 133 (AGLI…ALAM), 135 to 155 (IGPA…LSIG), 173 to 195 (LWSS…WRYW), and 206 to 226 (LILW…VCLL).

Belongs to the paxB family.

It localises to the membrane. Its pathway is secondary metabolite biosynthesis. Functionally, terpene cyclase; part of the gene cluster that mediates the biosynthesis of lolitrems, indole-diterpene mycotoxins that are potent tremorgens in mammals, and are synthesized by clavicipitaceous fungal endophytes in association with their grass hosts. The geranylgeranyl diphosphate (GGPP) synthase ltmG is proposed to catalyze the first step in lolitrem biosynthesis. LtmG catalyzes a series of iterative condensations of isopentenyl diphosphate (IPP) with dimethylallyl diphosphate (DMAPP), geranyl diphosphate (GPP), and farnesyl diphosphate (FPP), to form GGPP. GGPP then condenses with indole-3-glycerol phosphate to form 3-geranylgeranylindole, an acyclic intermediate, to be incorporated into paxilline. Either ltmG or ltmC could be responsible for this step, as both are putative prenyl transferases. The FAD-dependent monooxygenase ltmM then catalyzes the epoxidation of the two terminal alkenes of the geranylgeranyl moiety, which is subsequently cyclized by ltmB, to paspaline. The cytochrome P450 monooxygenases ltmQ and ltmP can sequentially oxidize paspaline to terpendole E and terpendole F. Alternatively, ltmP converts paspaline to an intermediate which is oxidized by ltmQ to terpendole F. LtmF, ltmK, ltmE and ltmJ appear to be unique to the epichloe endophytes. The prenyltransferase ltmF is involved in the 27-hydroxyl-O-prenylation. The cytochrome P450 monooxygenase ltmK is required for the oxidative acetal ring formation. The multi-functional prenyltransferase ltmE is required for C20- and C21-prenylations of the indole ring of paspalanes and acts together with the cytochrome P450 monooxygenase ltmJ to yield lolitremanes by multiple oxidations and ring closures. The stereoisomer pairs of lolitriol and lolitrem N or lolitrem B and lolitrem F may be attributed to variations in the way in which ring closure can occur under the action of ltmJ. While the major product of this pathway is lolitrem B, the prenyl transferases and cytochrome P450 monooxygenases identified in this pathway have a remarkable versatility in their regio- and stereo-specificities to generate a diverse range of metabolites that are products of a metabolic grid rather than a linear pathway. The chain is Terpene cyclase ltmB from Epichloe festucae var. lolii (Neotyphodium lolii).